Reading from the N-terminus, the 214-residue chain is Large ribosomal subunit protein uL1 (214 aa).

This sequence belongs to the universal ribosomal protein uL1 family. As to quaternary structure, part of the 50S ribosomal subunit.

Functionally, binds directly to 23S rRNA. Probably involved in E site tRNA release. Its function is as follows. Protein L1 is also a translational repressor protein, it controls the translation of its operon by binding to its mRNA. This chain is Large ribosomal subunit protein uL1, found in Methanopyrus kandleri (strain AV19 / DSM 6324 / JCM 9639 / NBRC 100938).